A 264-amino-acid polypeptide reads, in one-letter code: N-carbamoylsarcosine amidase (264 aa).

Cys177 functions as the Nucleophile in the catalytic mechanism. The segment at 240–264 (TVPKTLSDPQPEVEAPADPVFAEQH) is disordered.

As to quaternary structure, homotetramer. Sulfate is required as a cofactor.

The enzyme catalyses N-carbamoylsarcosine + H2O + 2 H(+) = sarcosine + NH4(+) + CO2. The protein operates within amine and polyamine degradation; creatinine degradation; sarcosine from creatinine: step 3/3. The protein is N-carbamoylsarcosine amidase of Arthrobacter sp.